Consider the following 241-residue polypeptide: Ubiquinone biosynthesis O-methyltransferase (241 aa).

S-adenosyl-L-methionine contacts are provided by arginine 46, glycine 66, aspartate 87, and methionine 131.

The protein belongs to the methyltransferase superfamily. UbiG/COQ3 family.

The enzyme catalyses a 3-demethylubiquinol + S-adenosyl-L-methionine = a ubiquinol + S-adenosyl-L-homocysteine + H(+). The catalysed reaction is a 3-(all-trans-polyprenyl)benzene-1,2-diol + S-adenosyl-L-methionine = a 2-methoxy-6-(all-trans-polyprenyl)phenol + S-adenosyl-L-homocysteine + H(+). It participates in cofactor biosynthesis; ubiquinone biosynthesis. O-methyltransferase that catalyzes the 2 O-methylation steps in the ubiquinone biosynthetic pathway. The polypeptide is Ubiquinone biosynthesis O-methyltransferase (Bordetella avium (strain 197N)).